An 891-amino-acid chain; its full sequence is Valine--tRNA ligase (891 aa).

The short motif at 43–53 is the 'HIGH' region element; the sequence is PFTSGTLHLGH. Residues 536-540 carry the 'KMSKS' region motif; that stretch reads KMSKS. Lys-539 contacts ATP.

The protein belongs to the class-I aminoacyl-tRNA synthetase family. ValS type 2 subfamily.

The protein localises to the cytoplasm. It carries out the reaction tRNA(Val) + L-valine + ATP = L-valyl-tRNA(Val) + AMP + diphosphate. Its function is as follows. Catalyzes the attachment of valine to tRNA(Val). As ValRS can inadvertently accommodate and process structurally similar amino acids such as threonine, to avoid such errors, it has a 'posttransfer' editing activity that hydrolyzes mischarged Thr-tRNA(Val) in a tRNA-dependent manner. The polypeptide is Valine--tRNA ligase (Pyrococcus horikoshii (strain ATCC 700860 / DSM 12428 / JCM 9974 / NBRC 100139 / OT-3)).